A 508-amino-acid chain; its full sequence is Rhamnogalacturonan I rhamnosyltransferase 1 (508 aa).

The helical; Signal-anchor for type II membrane protein transmembrane segment at 41–63 (LWMIRAVTVLLLWSCFVHLMALG) threads the bilayer. Residues Asn-136, Asn-202, and Asn-223 are each glycosylated (N-linked (GlcNAc...) asparagine). 277–279 (HLR) contributes to the substrate binding site. Asn-391 carries N-linked (GlcNAc...) asparagine glycosylation.

It belongs to the glycosyltransferase GT106 family. As to expression, highly expressed in siliques. Expressed in stems and flowers. Expressed at low levels in roots and rosette leaves.

The protein resides in the golgi apparatus membrane. The enzyme catalyses alpha-D-galacturonosyl-[(1-&gt;2)-alpha-L-rhamnosyl-(1-&gt;4)-alpha-D-galacturonosyl](n) + UDP-beta-L-rhamnose = [(1-&gt;2)-alpha-L-rhamnosyl-(1-&gt;4)-alpha-D-galacturonosyl](n+1) + UDP + H(+). It functions in the pathway glycan metabolism; pectin biosynthesis. Functionally, glycosyltransferase involved in the formation of rhamnogalacturonan I (RG-I) oligosaccharides in the seed coat mucilage, which is a specialized cell wall with abundant RG-I. Transfers the rhamnose residue from UDP-beta-L-rhamnose to RG-I oligosaccharides. Prefers RG-I oligosaccharides with a degree of polymerization of 5 or larger than 5. Does not act on oligosaccharides with a degree of polymerization of 4 or smaller than 4. Does not require metal ions for its activity. In Arabidopsis thaliana (Mouse-ear cress), this protein is Rhamnogalacturonan I rhamnosyltransferase 1.